Here is a 109-residue protein sequence, read N- to C-terminus: MAGALVRKAADYVRSKDFRDYLMSTHFWGPVANWGLPIAAINDMKKSPEIISGRMTFALCCYSLTFMRFAYKVQPRNWLLFACHATNEVAQLIQGGRLIRHEMSKKASA.

The residue at position 2 (Ala2) is an N-acetylalanine. The Mitochondrial matrix portion of the chain corresponds to Ala2–Asp20. The chain crosses the membrane as a helical span at residues Tyr21–Ile41. Residues Asn42 to Ser52 lie on the Mother cell cytoplasmic side of the membrane. The helical transmembrane segment at Gly53 to Tyr71 threads the bilayer. Lys72 is modified (N6-acetyllysine). The Mitochondrial matrix portion of the chain corresponds to Lys72–Ala109.

As to quaternary structure, homodimer. Forms heterodimer with MPC2. The heterodimer is the more stable and dominant form.

Its subcellular location is the mitochondrion inner membrane. The enzyme catalyses pyruvate(out) + H(+)(out) = pyruvate(in) + H(+)(in). Its function is as follows. Mediates the uptake of pyruvate into mitochondria. The sequence is that of Mitochondrial pyruvate carrier 1 (MPC1) from Bos taurus (Bovine).